The chain runs to 649 residues: Leucine-rich repeat transmembrane protein FLRT3 (649 aa).

Residues 1 to 28 form the signal peptide; the sequence is MISPAWSIFLIGTKIGLFLQVAPLSVMA. The LRRNT domain occupies 29–58; that stretch reads KSCPSVCRCDAGFIYCNDRFLTSIPTGIPE. Residues 29–528 are Extracellular-facing; that stretch reads KSCPSVCRCD…KEPYKNPNLP (500 aa). 2 cysteine pairs are disulfide-bonded: Cys-31/Cys-37 and Cys-35/Cys-44. The interval 38 to 67 is interaction with ADGRL3; it reads DAGFIYCNDRFLTSIPTGIPEDATTLYLQN. 10 LRR repeats span residues 59–80, 84–104, 105–126, 129–150, 155–176, 177–197, 200–220, 226–247, 248–269, and 272–293; these read DATTLYLQNNQINNAGIPSDLK, KVERIYLYHNSLDEFPTNLPK, YVKELHLQENNIRTITYDSLSK, YLEELRLDDNSVSAVSIEEGAF, YLRLLFLSRNHLSTIPWGLPRT, IEELRLDDNRIPTISSPSLQG, SLKRLVLDGNLLNNHGLGDKV, NLTELSLVRNSLTAAPVNLPGT, NLRKLYLQDNHINRVPPNAFSY, and QLYRLDMSNNNLSNLPQGIFDD. An N-linked (GlcNAc...) asparagine glycan is attached at Asn-226. N-linked (GlcNAc...) asparagine glycosylation is found at Asn-282 and Asn-296. Residues 305–357 form the LRRCT domain; that stretch reads NPWYCGCKMKWVRDWLQSLPVKVNVRGLMCQAPEKVRGMAIKDLNAELFDCKD. An intrachain disulfide couples Cys-309 to Cys-334. Residues 385-407 are disordered; the sequence is VTKQPDIKNPKLTKDHQTTGSPS. The span at 389–401 shows a compositional bias: basic and acidic residues; sequence PDIKNPKLTKDHQ. The Fibronectin type-III domain maps to 409–504; the sequence is KTITITVKSV…VCIETETAPL (96 aa). The chain crosses the membrane as a helical span at residues 529–549; the sequence is LAAIIGGAVALVTIALLALVC. Over 550–649 the chain is Cytoplasmic; sequence WYVHRNGSLF…GIPDSDHSHS (100 aa). Residues 622–649 are disordered; sequence LYKNNHSESSSNRSYRDSGIPDSDHSHS.

As to quaternary structure, monomer and homodimer. Self-associates (via leucine-rich repeats), giving rise to homooligomers. Interacts with FGFR1. Interacts (via extracellular domain) with ADGRL1/LPHN1 and LPHN2 (via olfactomedin-like domain). Interacts (via extracellular domain) with ADGRL3 (via olfactomedin-like domain); the interaction is direct. Interacts (via extracellular domain) with UNC5B and UNC5D (via extracellular domain); the interaction is direct. Identified in complexes composed of FLRT3, ADGRL3 and UNC5B, respectively FLRT3, ADGRL3 and UNC5D. May also interact (via extracellular domain) with UNC5A and UNC5C. Interacts (via cytoplasmic domain) with ROBO1. Post-translationally, N-glycosylated. In terms of processing, proteolytic cleavage in the juxtamembrane region gives rise to a soluble ectodomain. Cleavage is probably effected by a metalloprotease.

The protein localises to the cell membrane. It localises to the presynaptic cell membrane. The protein resides in the endoplasmic reticulum membrane. Its subcellular location is the cell junction. It is found in the focal adhesion. The protein localises to the secreted. It localises to the cell projection. The protein resides in the axon. Its subcellular location is the growth cone membrane. Functions in cell-cell adhesion, cell migration and axon guidance, exerting an attractive or repulsive role depending on its interaction partners. Plays a role in the spatial organization of brain neurons. Plays a role in vascular development in the retina. Plays a role in cell-cell adhesion via its interaction with ADGRL3 and probably also other latrophilins that are expressed at the surface of adjacent cells. Interaction with the intracellular domain of ROBO1 mediates axon attraction towards cells expressing NTN1. Mediates axon growth cone collapse and plays a repulsive role in neuron guidance via its interaction with UNC5B, and possibly also other UNC-5 family members. Promotes neurite outgrowth (in vitro). Mediates cell-cell contacts that promote an increase both in neurite number and in neurite length. Plays a role in the regulation of the density of glutamaergic synapses. Plays a role in fibroblast growth factor-mediated signaling cascades. Required for normal morphogenesis during embryonic development, but not for normal embryonic patterning. Required for normal ventral closure, headfold fusion and definitive endoderm migration during embryonic development. Required for the formation of a normal basement membrane and the maintenance of a normal anterior visceral endoderm during embryonic development. The chain is Leucine-rich repeat transmembrane protein FLRT3 (FLRT3) from Pongo abelii (Sumatran orangutan).